The sequence spans 157 residues: Protein E6 (157 aa).

Zinc fingers lie at residues Cys-41–Cys-77 and Cys-114–Cys-150.

The protein belongs to the papillomaviridae E6 protein family. As to quaternary structure, forms homodimers. Interacts with ubiquitin-protein ligase UBE3A/E6-AP; this interaction stimulates UBE3A ubiquitin activity. Interacts with host BAK1.

It is found in the host cytoplasm. It localises to the host nucleus. Its function is as follows. Plays a major role in the induction and maintenance of cellular transformation. E6 associates with host UBE3A/E6-AP ubiquitin-protein ligase and modulates its activity. Protects host keratinocytes from apoptosis by mediating the degradation of host BAK1. May also inhibit host immune response. The chain is Protein E6 from Human papillomavirus type 5b.